A 458-amino-acid polypeptide reads, in one-letter code: Argininosuccinate lyase (458 aa).

It belongs to the lyase 1 family. Argininosuccinate lyase subfamily.

It localises to the cytoplasm. It catalyses the reaction 2-(N(omega)-L-arginino)succinate = fumarate + L-arginine. Its pathway is amino-acid biosynthesis; L-arginine biosynthesis; L-arginine from L-ornithine and carbamoyl phosphate: step 3/3. The sequence is that of Argininosuccinate lyase from Salmonella schwarzengrund (strain CVM19633).